Reading from the N-terminus, the 272-residue chain is Shikimate dehydrogenase (NADP(+)) (272 aa).

Residues 14-16 (SKS) and threonine 61 each bind shikimate. The active-site Proton acceptor is lysine 65. Residue glutamate 77 coordinates NADP(+). Residues asparagine 86 and aspartate 102 each coordinate shikimate. NADP(+) contacts are provided by residues 126-130 (GAGGA), 150-155 (NRTFSK), and methionine 213. Residue tyrosine 215 participates in shikimate binding. NADP(+) is bound at residue glycine 237.

The protein belongs to the shikimate dehydrogenase family. Homodimer.

The enzyme catalyses shikimate + NADP(+) = 3-dehydroshikimate + NADPH + H(+). Its pathway is metabolic intermediate biosynthesis; chorismate biosynthesis; chorismate from D-erythrose 4-phosphate and phosphoenolpyruvate: step 4/7. Its function is as follows. Involved in the biosynthesis of the chorismate, which leads to the biosynthesis of aromatic amino acids. Catalyzes the reversible NADPH linked reduction of 3-dehydroshikimate (DHSA) to yield shikimate (SA). The chain is Shikimate dehydrogenase (NADP(+)) from Psychromonas ingrahamii (strain DSM 17664 / CCUG 51855 / 37).